The following is a 305-amino-acid chain: UDP-3-O-acyl-N-acetylglucosamine deacetylase (305 aa).

Zn(2+) is bound by residues H79, H238, and D242. H265 serves as the catalytic Proton donor.

This sequence belongs to the LpxC family. Zn(2+) is required as a cofactor.

The enzyme catalyses a UDP-3-O-[(3R)-3-hydroxyacyl]-N-acetyl-alpha-D-glucosamine + H2O = a UDP-3-O-[(3R)-3-hydroxyacyl]-alpha-D-glucosamine + acetate. It functions in the pathway glycolipid biosynthesis; lipid IV(A) biosynthesis; lipid IV(A) from (3R)-3-hydroxytetradecanoyl-[acyl-carrier-protein] and UDP-N-acetyl-alpha-D-glucosamine: step 2/6. In terms of biological role, catalyzes the hydrolysis of UDP-3-O-myristoyl-N-acetylglucosamine to form UDP-3-O-myristoylglucosamine and acetate, the committed step in lipid A biosynthesis. The sequence is that of UDP-3-O-acyl-N-acetylglucosamine deacetylase from Pectobacterium atrosepticum (strain SCRI 1043 / ATCC BAA-672) (Erwinia carotovora subsp. atroseptica).